A 180-amino-acid polypeptide reads, in one-letter code: Cytokinin-beta-glucosidase 1 (180 aa).

Hydrolyzes cytokinin glucosides thus liberating free cytokinins. In Panax ginseng (Korean ginseng), this protein is Cytokinin-beta-glucosidase 1 (ROLC1).